A 344-amino-acid polypeptide reads, in one-letter code: Methionine import ATP-binding protein MetN (344 aa).

The ABC transporter domain maps to 2–241; sequence IEINRVNKIF…PKTALAQEFI (240 aa). An ATP-binding site is contributed by 38–45; the sequence is GSSGAGKS.

Belongs to the ABC transporter superfamily. Methionine importer (TC 3.A.1.24) family. As to quaternary structure, the complex is composed of two ATP-binding proteins (MetN), two transmembrane proteins (MetI) and a solute-binding protein (MetQ).

Its subcellular location is the cell inner membrane. It catalyses the reaction L-methionine(out) + ATP + H2O = L-methionine(in) + ADP + phosphate + H(+). The catalysed reaction is D-methionine(out) + ATP + H2O = D-methionine(in) + ADP + phosphate + H(+). Its function is as follows. Part of the ABC transporter complex MetNIQ involved in methionine import. Responsible for energy coupling to the transport system. In Aliivibrio fischeri (strain ATCC 700601 / ES114) (Vibrio fischeri), this protein is Methionine import ATP-binding protein MetN.